The sequence spans 492 residues: Endoglucanase 15 (492 aa).

The signal sequence occupies residues 1 to 30 (MSCISSQCFITIKSICIVLLLSITCGAVSA). The active-site Nucleophile is the D86. Active-site residues include H414, D466, and E475.

The protein belongs to the glycosyl hydrolase 9 (cellulase E) family.

It localises to the secreted. The enzyme catalyses Endohydrolysis of (1-&gt;4)-beta-D-glucosidic linkages in cellulose, lichenin and cereal beta-D-glucans.. This chain is Endoglucanase 15, found in Arabidopsis thaliana (Mouse-ear cress).